Reading from the N-terminus, the 515-residue chain is ATP synthase subunit alpha (515 aa).

ATP is bound at residue 169-176 (GDRQTGKT).

It belongs to the ATPase alpha/beta chains family. F-type ATPases have 2 components, CF(1) - the catalytic core - and CF(0) - the membrane proton channel. CF(1) has five subunits: alpha(3), beta(3), gamma(1), delta(1), epsilon(1). CF(0) has three main subunits: a(1), b(2) and c(9-12). The alpha and beta chains form an alternating ring which encloses part of the gamma chain. CF(1) is attached to CF(0) by a central stalk formed by the gamma and epsilon chains, while a peripheral stalk is formed by the delta and b chains.

The protein resides in the cell inner membrane. It carries out the reaction ATP + H2O + 4 H(+)(in) = ADP + phosphate + 5 H(+)(out). Produces ATP from ADP in the presence of a proton gradient across the membrane. The alpha chain is a regulatory subunit. This Myxococcus xanthus protein is ATP synthase subunit alpha.